The primary structure comprises 471 residues: Glutamate--tRNA ligase (471 aa).

The 'HIGH' region signature appears at 9-19; that stretch reads PSPTGYLHVGG. Positions 98, 100, 125, and 127 each coordinate Zn(2+). Positions 237–241 match the 'KMSKS' region motif; sequence KLSKR. Residue Lys240 coordinates ATP.

Belongs to the class-I aminoacyl-tRNA synthetase family. Glutamate--tRNA ligase type 1 subfamily. In terms of assembly, monomer. Zn(2+) is required as a cofactor.

It is found in the cytoplasm. It carries out the reaction tRNA(Glu) + L-glutamate + ATP = L-glutamyl-tRNA(Glu) + AMP + diphosphate. In terms of biological role, catalyzes the attachment of glutamate to tRNA(Glu) in a two-step reaction: glutamate is first activated by ATP to form Glu-AMP and then transferred to the acceptor end of tRNA(Glu). The chain is Glutamate--tRNA ligase from Escherichia coli O157:H7.